We begin with the raw amino-acid sequence, 100 residues long: NADH-quinone oxidoreductase subunit K (100 aa).

3 helical membrane passes run 1 to 21 (MIGL…GLAG), 28 to 48 (ILLL…GFVA), and 64 to 84 (FIIA…ILWF).

This sequence belongs to the complex I subunit 4L family. In terms of assembly, NDH-1 is composed of 14 different subunits. Subunits NuoA, H, J, K, L, M, N constitute the membrane sector of the complex.

It is found in the cell inner membrane. It catalyses the reaction a quinone + NADH + 5 H(+)(in) = a quinol + NAD(+) + 4 H(+)(out). In terms of biological role, NDH-1 shuttles electrons from NADH, via FMN and iron-sulfur (Fe-S) centers, to quinones in the respiratory chain. The immediate electron acceptor for the enzyme in this species is believed to be ubiquinone. Couples the redox reaction to proton translocation (for every two electrons transferred, four hydrogen ions are translocated across the cytoplasmic membrane), and thus conserves the redox energy in a proton gradient. This is NADH-quinone oxidoreductase subunit K from Helicobacter pylori (strain Shi470).